Reading from the N-terminus, the 51-residue chain is Large ribosomal subunit protein eL39 (51 aa).

The protein belongs to the eukaryotic ribosomal protein eL39 family.

This is Large ribosomal subunit protein eL39 from Thermococcus sibiricus (strain DSM 12597 / MM 739).